The sequence spans 506 residues: Ubiquitin carboxyl-terminal hydrolase 22 (506 aa).

A UBP-type zinc finger spans residues 4-121; that stretch reads AGCSHVNGFK…KEEQRKAWKL (118 aa). The Zn(2+) site is built by Cys-6, His-8, Cys-46, Cys-49, Cys-59, Cys-62, Cys-67, His-72, His-76, His-82, Cys-95, and Cys-98. The 343-residue stretch at 159-501 folds into the USP domain; sequence RGLINLGNTC…EGYLLFYHKQ (343 aa). Cys-168 acts as the Nucleophile in catalysis. His-460 serves as the catalytic Proton acceptor.

This sequence belongs to the peptidase C19 family. UBP8 subfamily. In terms of assembly, component of some SAGA transcription coactivator-HAT complexes.

It localises to the nucleus. The enzyme catalyses Thiol-dependent hydrolysis of ester, thioester, amide, peptide and isopeptide bonds formed by the C-terminal Gly of ubiquitin (a 76-residue protein attached to proteins as an intracellular targeting signal).. In terms of biological role, histone deubiquitinating component of the transcription regulatory histone acetylation (HAT) complex SAGA. Catalyzes the deubiquitination of both histones H2A and H2B, thereby acting as a coactivator. Recruited to specific gene promoters by activators, where it is required for transcription. This is Ubiquitin carboxyl-terminal hydrolase 22 (usp22) from Danio rerio (Zebrafish).